We begin with the raw amino-acid sequence, 713 residues long: NAD(+) hydrolase SARM1 (713 aa).

An ARM 1 repeat occupies 53–96 (DVQAVLDGSLPALRSAIRTLRSSKDTGDLEETRRAIAETFQLVE). Residues tryptophan 99, arginine 106, 145-153 (EQILVSENR), and 186-189 (HMFK) each bind NAD(+). ARM repeat units lie at residues 110 to 149 (EEICNRIRLDGGLELLLQLMQTPAVEITYESAKLLEQILV), 151 to 189 (ENRDYVARMGLGVILNLTREQEDAQLARSVSGILEHMFK), 192 to 231 (EETSAQLITNGALDTILYWCRGTDPTVLRHCAVALSNCAM), 233 to 276 (GGHR…LAAN), 277 to 310 (REMEKEVVKSGTLELVEPFIASLDPDEFARNMLD), 311 to 350 (SADSMQGRTAADLQHLLPLLDGTRLEGKCIAAFYLCVETS), and 355 to 398 (QRNT…EEVP). 2 SAM domains span residues 408 to 472 (WKSG…LKTY) and 478 to 537 (CDPN…ILSA). One can recognise a TIR domain in the interval 552–695 (KGPDVFISYR…KILRFLEGCP (144 aa)). NAD(+)-binding positions include 561 to 562 (RR) and glutamate 591. Residue glutamate 634 is part of the active site.

The protein belongs to the SARM1 family. Homooctamer; forms an octameric ring via SAM domains.

The protein localises to the cytoplasm. It localises to the cell projection. Its subcellular location is the axon. It is found in the dendrite. The protein resides in the synapse. The protein localises to the mitochondrion. The catalysed reaction is NAD(+) + H2O = ADP-D-ribose + nicotinamide + H(+). The enzyme catalyses NAD(+) = cyclic ADP-beta-D-ribose + nicotinamide + H(+). It carries out the reaction NADP(+) + H2O = ADP-D-ribose 2'-phosphate + nicotinamide + H(+). Autoinhibited: in the inactive state, the enzymatic TIR domain is held apart by the autoinhibiting ARM repeats. NAD(+)-binding to ARM repeats maintains an inactive state by promoting interaction between ARM repeats and the TIR domain, thereby facilitating inhibition of the enzymatic TIR domain. Following activation, possibly by nicotinamide mononucleotide (NMN), auto-inhibitory interactions are released, allowing self-association of the TIR domains and subsequent activation of the NAD(+) hydrolase (NADase) activity. Self-association of TIR domains is facilitated by the octamer of SAM domains. In terms of biological role, NAD(+) hydrolase, which plays a key role in axonal degeneration following injury by regulating NAD(+) metabolism. Acts as a negative regulator of MYD88- and TRIF-dependent toll-like receptor signaling pathway by promoting Wallerian degeneration, an injury-induced form of programmed subcellular death which involves degeneration of an axon distal to the injury site. Wallerian degeneration is triggerred by NAD(+) depletion: in response to injury, SARM1 is activated and catalyzes cleavage of NAD(+) into ADP-D-ribose (ADPR), cyclic ADPR (cADPR) and nicotinamide; NAD(+) cleavage promoting cytoskeletal degradation and axon destruction. Also able to hydrolyze NADP(+), but not other NAD(+)-related molecules. Can activate neuronal cell death in response to stress. The chain is NAD(+) hydrolase SARM1 from Danio rerio (Zebrafish).